Reading from the N-terminus, the 498-residue chain is uncharacterized protein (498 aa).

The next 11 membrane-spanning stretches (helical) occupy residues 54-74 (LLKM…MAFL), 100-120 (VAVS…VVLV), 128-148 (MLAF…FMSS), 150-170 (GGLI…FPAL), 188-208 (SYLF…AYAL), 221-241 (WIYI…LFAL), 302-322 (VLYG…FVGL), 326-346 (YMTI…AWLS), 353-373 (AVYL…MLAS), 381-401 (TATY…LGWL), and 446-466 (AFTL…FFSL).

This sequence belongs to the major facilitator superfamily. Allantoate permease family.

The protein resides in the membrane. This is an uncharacterized protein from Schizosaccharomyces pombe (strain 972 / ATCC 24843) (Fission yeast).